The sequence spans 566 residues: Phenylalanine--tRNA ligase beta subunit (566 aa).

The 76-residue stretch at 287 to 362 (YFQEEVEFNV…IGEGLSSFNP (76 aa)) folds into the B5 domain. Residues Asp340, Asp346, Glu349, and Asp350 each contribute to the Mg(2+) site.

The protein belongs to the phenylalanyl-tRNA synthetase beta subunit family. Type 2 subfamily. As to quaternary structure, tetramer of two alpha and two beta subunits. The cofactor is Mg(2+).

It localises to the cytoplasm. The catalysed reaction is tRNA(Phe) + L-phenylalanine + ATP = L-phenylalanyl-tRNA(Phe) + AMP + diphosphate + H(+). This is Phenylalanine--tRNA ligase beta subunit from Borreliella burgdorferi (strain ZS7) (Borrelia burgdorferi).